Here is a 108-residue protein sequence, read N- to C-terminus: Thiosulfate sulfurtransferase GlpE (108 aa).

Residues 18–106 enclose the Rhodanese domain; sequence ENEGATLADI…WERSGLPIET (89 aa). Cysteine 66 serves as the catalytic Cysteine persulfide intermediate.

It belongs to the GlpE family.

The protein resides in the cytoplasm. The catalysed reaction is thiosulfate + hydrogen cyanide = thiocyanate + sulfite + 2 H(+). It carries out the reaction thiosulfate + [thioredoxin]-dithiol = [thioredoxin]-disulfide + hydrogen sulfide + sulfite + 2 H(+). In terms of biological role, transferase that catalyzes the transfer of sulfur from thiosulfate to thiophilic acceptors such as cyanide or dithiols. May function in a CysM-independent thiosulfate assimilation pathway by catalyzing the conversion of thiosulfate to sulfite, which can then be used for L-cysteine biosynthesis. The chain is Thiosulfate sulfurtransferase GlpE from Actinobacillus pleuropneumoniae serotype 7 (strain AP76).